Consider the following 391-residue polypeptide: Elongation factor Tu (391 aa).

The tr-type G domain maps to Lys10–Glu201. The tract at residues Gly19 to Thr26 is G1. GTP is bound at residue Gly19–Thr26. Thr26 contacts Mg(2+). Residues Gly55–Ser59 are G2. The G3 stretch occupies residues Asp76–Gly79. GTP is bound by residues Asp76–His80 and Asn131–Asp134. The interval Asn131 to Asp134 is G4. The G5 stretch occupies residues Ser169–Leu171.

Belongs to the TRAFAC class translation factor GTPase superfamily. Classic translation factor GTPase family. EF-Tu/EF-1A subfamily. In terms of assembly, monomer.

Its subcellular location is the cytoplasm. The catalysed reaction is GTP + H2O = GDP + phosphate + H(+). In terms of biological role, GTP hydrolase that promotes the GTP-dependent binding of aminoacyl-tRNA to the A-site of ribosomes during protein biosynthesis. This chain is Elongation factor Tu, found in Ruegeria sp. (strain TM1040) (Silicibacter sp.).